The chain runs to 102 residues: Large ribosomal subunit protein bL21 (102 aa).

This sequence belongs to the bacterial ribosomal protein bL21 family. In terms of assembly, part of the 50S ribosomal subunit. Contacts protein L20.

Functionally, this protein binds to 23S rRNA in the presence of protein L20. The polypeptide is Large ribosomal subunit protein bL21 (Staphylococcus aureus).